A 431-amino-acid polypeptide reads, in one-letter code: Glutamate--tRNA ligase 1 (431 aa).

A 'HIGH' region motif is present at residues 6–16; the sequence is PSPTGDMHIGN. The 'KMSKS' region signature appears at 235 to 239; sequence KMSKR. ATP is bound at residue Lys-238.

Belongs to the class-I aminoacyl-tRNA synthetase family. Glutamate--tRNA ligase type 1 subfamily. In terms of assembly, monomer.

The protein localises to the cytoplasm. The catalysed reaction is tRNA(Glu) + L-glutamate + ATP = L-glutamyl-tRNA(Glu) + AMP + diphosphate. In terms of biological role, catalyzes the attachment of glutamate to tRNA(Glu) in a two-step reaction: glutamate is first activated by ATP to form Glu-AMP and then transferred to the acceptor end of tRNA(Glu). This chain is Glutamate--tRNA ligase 1, found in Campylobacter curvus (strain 525.92).